The primary structure comprises 356 residues: Putative aminopeptidase FrvX (356 aa).

Positions 61 and 175 each coordinate a divalent metal cation. The Proton acceptor role is filled by Glu-205. Residues Glu-206, Asp-228, and His-316 each coordinate a divalent metal cation.

It belongs to the peptidase M42 family. A divalent metal cation is required as a cofactor.

The protein is Putative aminopeptidase FrvX (frvX) of Escherichia coli (strain K12).